A 233-amino-acid chain; its full sequence is Ribitol-5-phosphate cytidylyltransferase (233 aa).

CTP contacts are provided by residues 7–10 (LAGG) and 80–86 (GADRNET).

The protein belongs to the IspD/TarI cytidylyltransferase family. TarI subfamily.

The enzyme catalyses D-ribitol 5-phosphate + CTP + H(+) = CDP-L-ribitol + diphosphate. The protein operates within cell wall biogenesis; poly(ribitol phosphate) teichoic acid biosynthesis. Catalyzes the transfer of the cytidylyl group of CTP to D-ribitol 5-phosphate. This is Ribitol-5-phosphate cytidylyltransferase from Lactiplantibacillus plantarum (strain ATCC BAA-793 / NCIMB 8826 / WCFS1) (Lactobacillus plantarum).